The chain runs to 434 residues: Putative DD-carboxypeptidase TP_0574 (434 aa).

A signal peptide spans 1–19 (MKVKYALLSAGALQLLVVG). Residue Cys20 is the site of N-palmitoyl cysteine attachment. Cys20 carries S-diacylglycerol cysteine lipidation.

As to quaternary structure, probably a monomer; a non-lipidated construct (residues 22-434) is monomeric in solution but crystallizes as a homodimer. It depends on Zn(2+) as a cofactor. Post-translationally, the N-terminus is blocked. Present as a doublet of low abundance 48 kDa and high abundance 47 kDa proteins. The longer form is probably due to readthrough of the stop codon; the extra amino acids at the C-terminus would be X-Lys-Arg-Gly-Val-Leu-Ser-Arg-Val-Ser, a peptide antibody against this sequence detects only the 48 kDa form.

It is found in the cell inner membrane. In terms of biological role, a possible D,D-carboxypeptidase, that releases amino acids sequentially from a proteins C-terminus. Has zinc-dependent carboxypeptidase activity on synthetic depsipeptide substrates. May serve to decrease cross-linking of peptidoglycan, promoting the highly sinusous motility of this spirochaete. Overexpression of the whole protein in E.coli leads to aberrant cell morphology and extrusion of the cytoplasm, while overexpression of a construct with the first 62 resides of the protein fused to PhoA does have this effect, suggesting the whole protein, not the lipoprotein moiety, is toxic. Binds penicillin. Penicillin binding is covalent, does not require lipidation, and is zinc-dependent. While this protein has beta-lactamase activity in vitro, that is probably not its role in vivo, as T.pallidum is very sensitive to penicillin antibiotics. Its function is as follows. A pathogen-specific membrane antigen. Most abundant of the membrane lipoproteins, only found in pathogenic treponemes, suggesting that it is an important structural moiety in the cell envelope of virulent treponemal subspecies. A lipopeptide corresponding to the first 6 mature residues induces host (human and mouse) cytokine release by monocyte cell lines via TLR2 and CD14; nonlipidated protein does not stimulate host cells. Stimulates host (human) dendritic cell maturation to become MHC class II-positive antigen presenting cells via TLR2, which depends on lipidation; nonlipidated protein does not stimulate maturation. The protein is Putative DD-carboxypeptidase TP_0574 of Treponema pallidum (strain Nichols).